A 437-amino-acid chain; its full sequence is Leucine-rich repeat flightless-interacting protein 2 (437 aa).

The residue at position 18 (serine 18) is a Phosphoserine. Residues 22–49 adopt a coiled-coil conformation; it reads EALSNIAREAEARLAAKRAARAEARDIR. The segment covering 33–62 has biased composition (basic and acidic residues); that stretch reads ARLAAKRAARAEARDIRMRELERQQRESSS. Residues 33–152 form a disordered region; sequence ARLAAKRAAR…DTSLSELRES (120 aa). The span at 63–74 shows a compositional bias: polar residues; the sequence is KDITGTHWSRAS. The span at 77–105 shows a compositional bias: basic and acidic residues; that stretch reads KRRDMMYDSIKDRSSRVSSLLDEKSDKQY. Over residues 110–139 the composition is skewed to polar residues; it reads TRPSSRNSASATTPLSGNSSRRGSGDTSSL. Phosphoserine occurs at positions 114, 117, 125, 129, and 133. Threonine 136 bears the Phosphothreonine mark. Phosphoserine occurs at positions 137 and 138. 2 coiled-coil regions span residues 143 to 239 and 282 to 430; these read DTSL…LIEK and LDVR…KANR.

The protein belongs to the LRRFIP family. Interacts with DVL3 and FLII. Weakly interacts with MYD88 in resting cells. Following LPS-stimulation, the interaction with MYD88 is rapidly enhanced; the complex gradually dissociates to basal levels after 6 hours of stimulation. Interaction with MYD88 is regulated by LPS-induced phosphorylation. In the presence of LPS, competes with FLII for MYD88-binding.

Functionally, may function as activator of the canonical Wnt signaling pathway, in association with DVL3, upstream of CTNNB1/beta-catenin. Positively regulates Toll-like receptor (TLR) signaling in response to agonist probably by competing with the negative FLII regulator for MYD88-binding. This Rattus norvegicus (Rat) protein is Leucine-rich repeat flightless-interacting protein 2 (Lrrfip2).